A 196-amino-acid polypeptide reads, in one-letter code: MSEKATEIANLLGPTVESLGLELLGVEYLPAPGGATLRLYIDVPLAEQPDRIINVDDCERVSREVSAQLDVEDPISGNYTLEVSSPGVDRPLFTLDQFARHVGESAKIVLKLAQDGRRRFQGQIVRIDTEAAAVVFSVDGKDVQIGFDNIDKARILPDWVALGLAPQKPNKPGPKKPGHDKKKPSNEPAAGKPRAE.

The disordered stretch occupies residues 164–196 (LAPQKPNKPGPKKPGHDKKKPSNEPAAGKPRAE). Residues 173–182 (GPKKPGHDKK) are compositionally biased toward basic residues.

This sequence belongs to the RimP family.

It localises to the cytoplasm. Its function is as follows. Required for maturation of 30S ribosomal subunits. In Xanthomonas campestris pv. campestris (strain B100), this protein is Ribosome maturation factor RimP.